Consider the following 314-residue polypeptide: Glyceraldehyde-3-phosphate dehydrogenase A, chloroplastic (314 aa).

Residues 5–6, Asp29, and Arg74 contribute to the NADP(+) site; that span reads RI. Cysteines 13 and 283 form a disulfide. Residues 147-149, Thr178, Arg193, 206-207, and Arg229 each bind D-glyceraldehyde 3-phosphate; these read SCT and TG. The Nucleophile role is filled by Cys148. NADP(+) is bound at residue Asn311.

This sequence belongs to the glyceraldehyde-3-phosphate dehydrogenase family. Homotetramer.

The protein resides in the plastid. It is found in the chloroplast. The catalysed reaction is D-glyceraldehyde 3-phosphate + phosphate + NADP(+) = (2R)-3-phospho-glyceroyl phosphate + NADPH + H(+). It participates in carbohydrate biosynthesis; Calvin cycle. The chain is Glyceraldehyde-3-phosphate dehydrogenase A, chloroplastic (GapA) from Scenedesmus vacuolatus (Green alga).